The sequence spans 496 residues: Probable CtpA-like serine protease (496 aa).

Residues methionine 1–glutamate 16 show a composition bias toward basic and acidic residues. The segment at methionine 1–asparagine 27 is disordered. The segment covering alanine 18–asparagine 27 has biased composition (polar residues). Residues phenylalanine 39–isoleucine 59 form a helical membrane-spanning segment. The region spanning threonine 124 to glycine 206 is the PDZ domain. Active-site charge relay system residues include serine 329, aspartate 340, and lysine 354.

The protein belongs to the peptidase S41A family.

It localises to the cell membrane. This Staphylococcus aureus (strain COL) protein is Probable CtpA-like serine protease.